A 178-amino-acid polypeptide reads, in one-letter code: Large ribosomal subunit protein bL25 (178 aa).

Belongs to the bacterial ribosomal protein bL25 family. CTC subfamily. As to quaternary structure, part of the 50S ribosomal subunit; part of the 5S rRNA/L5/L18/L25 subcomplex. Contacts the 5S rRNA. Binds to the 5S rRNA independently of L5 and L18.

Functionally, this is one of the proteins that binds to the 5S RNA in the ribosome where it forms part of the central protuberance. The chain is Large ribosomal subunit protein bL25 from Helicobacter pylori (strain P12).